Here is a 445-residue protein sequence, read N- to C-terminus: Lipid A 1-phosphatase (445 aa).

The signal sequence occupies residues 1 to 22 (MNRESFLLLLVLLFALPLHLQA).

The protein resides in the periplasm. The protein operates within bacterial outer membrane biogenesis; LPS lipid A biosynthesis. Functionally, removes the 1-phosphate group from lipid A species. Absence of phosphate groups in lipid A renders the bacteria resistant to host-derived cationic antimicrobial peptides (CAMP) and allowing it to camouflage itself from the host innate immune response. This is Lipid A 1-phosphatase from Porphyromonas gingivalis (strain ATCC 33277 / DSM 20709 / CIP 103683 / JCM 12257 / NCTC 11834 / 2561).